The primary structure comprises 833 residues: Leucine--tRNA ligase (833 aa).

A 'HIGH' region motif is present at residues 41–52 (PYPSGAGLHVGH). The 'KMSKS' region motif lies at 610–614 (KMSKS). Lys-613 contacts ATP.

The protein belongs to the class-I aminoacyl-tRNA synthetase family.

Its subcellular location is the cytoplasm. The enzyme catalyses tRNA(Leu) + L-leucine + ATP = L-leucyl-tRNA(Leu) + AMP + diphosphate. In Streptococcus pyogenes serotype M2 (strain MGAS10270), this protein is Leucine--tRNA ligase.